Consider the following 295-residue polypeptide: Aspartate carbamoyltransferase catalytic subunit (295 aa).

2 residues coordinate carbamoyl phosphate: Arg54 and Thr55. Lys82 contributes to the L-aspartate binding site. Arg104, His132, and Gln135 together coordinate carbamoyl phosphate. Positions 165 and 218 each coordinate L-aspartate. Carbamoyl phosphate contacts are provided by Gly257 and Pro258.

It belongs to the aspartate/ornithine carbamoyltransferase superfamily. ATCase family. Heterododecamer (2C3:3R2) of six catalytic PyrB chains organized as two trimers (C3), and six regulatory PyrI chains organized as three dimers (R2).

The enzyme catalyses carbamoyl phosphate + L-aspartate = N-carbamoyl-L-aspartate + phosphate + H(+). Its pathway is pyrimidine metabolism; UMP biosynthesis via de novo pathway; (S)-dihydroorotate from bicarbonate: step 2/3. Functionally, catalyzes the condensation of carbamoyl phosphate and aspartate to form carbamoyl aspartate and inorganic phosphate, the committed step in the de novo pyrimidine nucleotide biosynthesis pathway. This is Aspartate carbamoyltransferase catalytic subunit from Wolbachia pipientis wMel.